We begin with the raw amino-acid sequence, 221 residues long: Protein myomaker (221 aa).

Residues 1 to 3 are Extracellular-facing; sequence MGT. The chain crosses the membrane as a helical span at residues 4–24; that stretch reads VVAKLLLPTLSSLAFLPTVSI. Residues 25-29 lie on the Cytoplasmic side of the membrane; it reads ATKRR. The helical transmembrane segment at 30 to 50 threads the bilayer; that stretch reads FYMEAMVYLFTMFFVAFSHAC. Residues 51 to 64 lie on the Extracellular side of the membrane; the sequence is DGPGLSVLCFMRRD. A helical membrane pass occupies residues 65–85; that stretch reads ILEYFSIYGTALSMWVSLMAL. Residues 86-93 lie on the Cytoplasmic side of the membrane; sequence ADFDEPQR. A helical transmembrane segment spans residues 94–110; the sequence is STFTMLGVLTIAVRTFH. Topologically, residues 111–113 are extracellular; that stretch reads DRW. A helical transmembrane segment spans residues 114–134; that stretch reads GYGVYSGPIGTATLIIAVKWL. Residues 135-153 lie on the Cytoplasmic side of the membrane; it reads KKMKEKKGLYPDKSIYTQQ. Residues 154–174 traverse the membrane as a helical segment; it reads IGPGLCFGALALMLRFFFEEW. Asp175 is a topological domain (extracellular). A helical membrane pass occupies residues 176 to 196; the sequence is YTYVHSFYHCALAMSFVLLLP. At 197-221 the chain is on the cytoplasmic side; that stretch reads KVNKKAGNAGAPAKLTFSTLCCTCV. S-palmitoyl cysteine attachment occurs at residues Cys217 and Cys218.

It belongs to the TMEM8 family. Interacts with MYMX. Palmitoylated at the C-terminus; palmitoylation promotes localization to the Golgi apparatus. In terms of tissue distribution, specifically expressed in skeletal muscle during embryogenesis and adult muscle regeneration.

The protein localises to the cell membrane. The protein resides in the golgi apparatus membrane. Its function is as follows. Myoblast-specific protein that mediates myoblast fusion, an essential step for the formation of multi-nucleated muscle fibers. Actively participates in the membrane fusion reaction by mediating the mixing of cell membrane lipids (hemifusion) upstream of MYMX. Acts independently of MYMX. Involved in skeletal muscle regeneration in response to injury by mediating the fusion of satellite cells, a population of muscle stem cells, with injured myofibers. Also involved in skeletal muscle hypertrophy, probably by mediating the fusion of satellite cells with myofibers. The protein is Protein myomaker of Mus musculus (Mouse).